A 117-amino-acid polypeptide reads, in one-letter code: MAAIPSSGSLIATHDYYRRRIGSTSSNSSCSSSEYTGEVIPHPPGLARQDSGHWWSSFFFGKQNQMGTPNGFESQQKTGTYTVTNGQVTCVAREIVMKRHLSESSDSGKEPGSPLPS.

The tract at residues 22 to 46 (GSTSSNSSCSSSEYTGEVIPHPPGL) is disordered. Residues 23-33 (STSSNSSCSSS) are compositionally biased toward low complexity.

Belongs to the PPDPF family. In terms of tissue distribution, expressed exclusively in the exocrine cells during pancreas development.

Probable regulator of exocrine pancreas development. The protein is Pancreatic progenitor cell differentiation and proliferation factor A (ppdpfa) of Danio rerio (Zebrafish).